The primary structure comprises 61 residues: Probable tautomerase LMOf2365_2536 (61 aa).

Residue Pro2 is the Proton acceptor; via imino nitrogen of the active site.

Belongs to the 4-oxalocrotonate tautomerase family.

The protein is Probable tautomerase LMOf2365_2536 of Listeria monocytogenes serotype 4b (strain F2365).